The following is an 89-amino-acid chain: Small ribosomal subunit protein uS15 (89 aa).

It belongs to the universal ribosomal protein uS15 family. Part of the 30S ribosomal subunit. Forms a bridge to the 50S subunit in the 70S ribosome, contacting the 23S rRNA.

One of the primary rRNA binding proteins, it binds directly to 16S rRNA where it helps nucleate assembly of the platform of the 30S subunit by binding and bridging several RNA helices of the 16S rRNA. Functionally, forms an intersubunit bridge (bridge B4) with the 23S rRNA of the 50S subunit in the ribosome. The chain is Small ribosomal subunit protein uS15 from Edwardsiella ictaluri (strain 93-146).